Here is a 157-residue protein sequence, read N- to C-terminus: GDP-mannose mannosyl hydrolase (157 aa).

Substrate contacts are provided by residues 2 to 3 (FL), Phe-8, and Arg-36. The Nudix hydrolase domain occupies 3–153 (LRQEDFAAVV…SRAYFSPDAP (151 aa)). The Mg(2+) site is built by Gly-49, Glu-69, and Gln-122. The Nudix box motif lies at 50 to 71 (GRVCKDETLEAAFARLTQAELG).

This sequence belongs to the Nudix hydrolase family. As to quaternary structure, homodimer. The cofactor is Mg(2+).

It carries out the reaction GDP-alpha-D-mannose + H2O = D-mannose + GDP + H(+). Functionally, hydrolyzes GDP-mannose. This Salmonella typhi protein is GDP-mannose mannosyl hydrolase.